Reading from the N-terminus, the 93-residue chain is Antitoxin EndoAI (93 aa).

The protein belongs to the MazE/EndoAI family. Homodimer, forms a heterohexamer composed of alternating toxin and antitoxin homodimers which inhibits the toxin's endoribonuclease activity. Antitoxin prevents RNA binding to the endoribonuclease.

Functionally, antitoxin component of a type II toxin-antitoxin (TA) system. Antitoxin that directly inhibits activity of EndoA in vitro. Upon expression in E.coli counteracts inhibitory effect of endoribonuclease EndoA. The EndoA-EndoAI complex does not seem to bind its own promoter. This Bacillus subtilis (strain 168) protein is Antitoxin EndoAI.